Here is a 445-residue protein sequence, read N- to C-terminus: tRNA-2-methylthio-N(6)-dimethylallyladenosine synthase (445 aa).

The MTTase N-terminal domain occupies 2 to 117 (QGLYIKSYGC…LPELIVKARK (116 aa)). C11, C47, C80, C157, C161, and C164 together coordinate [4Fe-4S] cluster. The region spanning 143-374 (KNQKVSAFIS…QELVHKQQLE (232 aa)) is the Radical SAM core domain. The 65-residue stretch at 377 to 441 (KKMIGETHPV…KNHLTGIIPH (65 aa)) folds into the TRAM domain.

It belongs to the methylthiotransferase family. MiaB subfamily. As to quaternary structure, monomer. Requires [4Fe-4S] cluster as cofactor.

The protein resides in the cytoplasm. The enzyme catalyses N(6)-dimethylallyladenosine(37) in tRNA + (sulfur carrier)-SH + AH2 + 2 S-adenosyl-L-methionine = 2-methylsulfanyl-N(6)-dimethylallyladenosine(37) in tRNA + (sulfur carrier)-H + 5'-deoxyadenosine + L-methionine + A + S-adenosyl-L-homocysteine + 2 H(+). In terms of biological role, catalyzes the methylthiolation of N6-(dimethylallyl)adenosine (i(6)A), leading to the formation of 2-methylthio-N6-(dimethylallyl)adenosine (ms(2)i(6)A) at position 37 in tRNAs that read codons beginning with uridine. This Ehrlichia ruminantium (strain Gardel) protein is tRNA-2-methylthio-N(6)-dimethylallyladenosine synthase.